A 138-amino-acid chain; its full sequence is Spermidine export protein MdtJ (138 aa).

A run of 4 helical transmembrane segments spans residues 1 to 21 (MIYW…TLSM), 30 to 50 (VVGM…LAMA), 54 to 74 (VALG…ITVF), and 81 to 101 (ESLS…IMLI).

This sequence belongs to the drug/metabolite transporter (DMT) superfamily. Small multidrug resistance (SMR) (TC 2.A.7.1) family. MdtJ subfamily. Forms a complex with MdtI.

It localises to the cell inner membrane. In terms of biological role, catalyzes the excretion of spermidine. In Photorhabdus laumondii subsp. laumondii (strain DSM 15139 / CIP 105565 / TT01) (Photorhabdus luminescens subsp. laumondii), this protein is Spermidine export protein MdtJ.